Here is a 2103-residue protein sequence, read N- to C-terminus: uncharacterized protein (2103 aa).

Residues 1–12 (MSVPGTPGAMEP) show a composition bias toward low complexity. Residues 1–61 (MSVPGTPGAM…DADDQEEEME (61 aa)) are disordered. Acidic residues predominate over residues 51–61 (EDADDQEEEME). One can recognise a Bromo domain in the interval 77–196 (YELQQGYRIL…MMLEQKLALL (120 aa)). Disordered regions lie at residues 730–750 (AKHKKHKSGKKSVSKKAITKK), 853–881 (NRELWTTDEGEGDLGKDSPKGEISKSIDS), 933–956 (QSKQTDYVDDSTKELSPRKKAKLS), 1224–1244 (SASPTISSTGQPLSSTTTLNG), and 1770–1817 (GATR…STSP). Residues 865–877 (DLGKDSPKGEISK) are compositionally biased toward basic and acidic residues. Residues 1224 to 1234 (SASPTISSTGQ) are compositionally biased toward polar residues. Low complexity predominate over residues 1235 to 1244 (PLSSTTTLNG). Over residues 1773–1794 (RSVSISKRQSRTSLQFHSPGIS) the composition is skewed to polar residues. Low complexity predominate over residues 1795 to 1808 (TTVPTNVNTNKPQT).

The protein localises to the nucleus. This is an uncharacterized protein from Homo sapiens (Human).